The sequence spans 254 residues: MGRVIRNQRKGAGSIFTSHTRLRKGAAKLRTLDYAERHGYIRGVVKQIIHDPGRGAPLAKVAFRDPYKYKLREETFIANEGVYTGQFIYAGKKASLNVGNILPLGACPEGTIVSNVEEKVGDRGALGRTSGNYVIIIGHNPDENKTRVKLPSGAKKIISSDARGVIGVVAGGGRIDKPLLKAGRAFHKYKVKRNSWPKTRGVAMNPVDHPHGGGNHQHIGKASTISRGAVSGQKAGLIAARRTGLLRGTQKTAE.

It belongs to the universal ribosomal protein uL2 family. In terms of assembly, component of the large ribosomal subunit. Mature ribosomes consist of a small (40S) and a large (60S) subunit. The 40S subunit contains about 32 different proteins and 1 molecule of RNA (18S). The 60S subunit contains 45 different proteins and 3 molecules of RNA (25S, 5.8S and 5S).

Its subcellular location is the cytoplasm. Its function is as follows. Component of the ribosome, a large ribonucleoprotein complex responsible for the synthesis of proteins in the cell. The small ribosomal subunit (SSU) binds messenger RNAs (mRNAs) and translates the encoded message by selecting cognate aminoacyl-transfer RNA (tRNA) molecules. The large subunit (LSU) contains the ribosomal catalytic site termed the peptidyl transferase center (PTC), which catalyzes the formation of peptide bonds, thereby polymerizing the amino acids delivered by tRNAs into a polypeptide chain. The nascent polypeptides leave the ribosome through a tunnel in the LSU and interact with protein factors that function in enzymatic processing, targeting, and the membrane insertion of nascent chains at the exit of the ribosomal tunnel. The chain is Large ribosomal subunit protein uL2 from Candida albicans (strain SC5314 / ATCC MYA-2876) (Yeast).